Consider the following 270-residue polypeptide: Putative phosphoenolpyruvate synthase regulatory protein (270 aa).

150–157 (GVSRCGKT) contributes to the ADP binding site.

It belongs to the pyruvate, phosphate/water dikinase regulatory protein family. PSRP subfamily.

It catalyses the reaction [pyruvate, water dikinase] + ADP = [pyruvate, water dikinase]-phosphate + AMP + H(+). It carries out the reaction [pyruvate, water dikinase]-phosphate + phosphate + H(+) = [pyruvate, water dikinase] + diphosphate. Functionally, bifunctional serine/threonine kinase and phosphorylase involved in the regulation of the phosphoenolpyruvate synthase (PEPS) by catalyzing its phosphorylation/dephosphorylation. This is Putative phosphoenolpyruvate synthase regulatory protein from Shewanella halifaxensis (strain HAW-EB4).